The chain runs to 366 residues: NADH-quinone oxidoreductase subunit D (366 aa).

It belongs to the complex I 49 kDa subunit family. As to quaternary structure, NDH-1 is composed of 14 different subunits. Subunits NuoB, C, D, E, F, and G constitute the peripheral sector of the complex.

The protein resides in the cell membrane. It carries out the reaction a quinone + NADH + 5 H(+)(in) = a quinol + NAD(+) + 4 H(+)(out). In terms of biological role, NDH-1 shuttles electrons from NADH, via FMN and iron-sulfur (Fe-S) centers, to quinones in the respiratory chain. The immediate electron acceptor for the enzyme in this species is believed to be a menaquinone. Couples the redox reaction to proton translocation (for every two electrons transferred, four hydrogen ions are translocated across the cytoplasmic membrane), and thus conserves the redox energy in a proton gradient. The polypeptide is NADH-quinone oxidoreductase subunit D (Desulforamulus reducens (strain ATCC BAA-1160 / DSM 100696 / MI-1) (Desulfotomaculum reducens)).